A 250-amino-acid chain; its full sequence is Ribonuclease HII (250 aa).

An RNase H type-2 domain is found at 66 to 250 (ELVAGVDEVG…TFAPVSDFFK (185 aa)). D72, E73, and D164 together coordinate a divalent metal cation.

This sequence belongs to the RNase HII family. It depends on Mn(2+) as a cofactor. The cofactor is Mg(2+).

It is found in the cytoplasm. It catalyses the reaction Endonucleolytic cleavage to 5'-phosphomonoester.. In terms of biological role, endonuclease that specifically degrades the RNA of RNA-DNA hybrids. This Lactobacillus helveticus (strain DPC 4571) protein is Ribonuclease HII.